The sequence spans 74 residues: Antitoxin VapB39 (74 aa).

Its function is as follows. Antitoxin component of a type II toxin-antitoxin (TA) system. The polypeptide is Antitoxin VapB39 (vapB39) (Mycobacterium tuberculosis (strain CDC 1551 / Oshkosh)).